The chain runs to 343 residues: Cyclin-Y-like protein 1 (343 aa).

A disordered region spans residues methionine 1–isoleucine 48. Positions alanine 17–glutamate 28 are enriched in basic and acidic residues. The Cyclin N-terminal domain occupies glutamate 145 to asparagine 267.

The protein belongs to the cyclin family. Cyclin Y subfamily.

It localises to the cell membrane. Functionally, key regulator of Wnt signaling implicated in various biological processes, such as embryonic neurogenesis. In Xenopus tropicalis (Western clawed frog), this protein is Cyclin-Y-like protein 1 (ccnyl1).